Here is a 120-residue protein sequence, read N- to C-terminus: Ribosome-binding factor A (120 aa).

This sequence belongs to the RbfA family. In terms of assembly, monomer. Binds 30S ribosomal subunits, but not 50S ribosomal subunits or 70S ribosomes.

Its subcellular location is the cytoplasm. Its function is as follows. One of several proteins that assist in the late maturation steps of the functional core of the 30S ribosomal subunit. Associates with free 30S ribosomal subunits (but not with 30S subunits that are part of 70S ribosomes or polysomes). Required for efficient processing of 16S rRNA. May interact with the 5'-terminal helix region of 16S rRNA. The protein is Ribosome-binding factor A of Rickettsia africae (strain ESF-5).